The chain runs to 560 residues: ATP synthase subunit beta, mitochondrial (560 aa).

A mitochondrion-targeting transit peptide spans 1 to 54 (MASRRLLASLLRQSAQRGGGLISRSLGNSIPKSASRASSRASPKGFLLNRAVQY). Disordered regions lie at residues 20–44 (GLIS…ASPK) and 58–81 (AAAP…KITD). 2 stretches are compositionally biased toward low complexity: residues 33–42 (SASRASSRAS) and 58–71 (AAAP…PPKS). 235–242 (GGAGVGKT) serves as a coordination point for ATP.

Belongs to the ATPase alpha/beta chains family. As to quaternary structure, F-type ATPases have 2 components, CF(1) - the catalytic core - and CF(0) - the membrane proton channel. CF(1) has five subunits: alpha(3), beta(3), gamma(1), delta(1), epsilon(1). CF(0) has three main subunits: a, b and c.

The protein localises to the mitochondrion. The protein resides in the mitochondrion inner membrane. It catalyses the reaction ATP + H2O + 4 H(+)(in) = ADP + phosphate + 5 H(+)(out). Its function is as follows. Mitochondrial membrane ATP synthase (F(1)F(0) ATP synthase or Complex V) produces ATP from ADP in the presence of a proton gradient across the membrane which is generated by electron transport complexes of the respiratory chain. F-type ATPases consist of two structural domains, F(1) - containing the extramembraneous catalytic core, and F(0) - containing the membrane proton channel, linked together by a central stalk and a peripheral stalk. During catalysis, ATP synthesis in the catalytic domain of F(1) is coupled via a rotary mechanism of the central stalk subunits to proton translocation. Subunits alpha and beta form the catalytic core in F(1). Rotation of the central stalk against the surrounding alpha(3)beta(3) subunits leads to hydrolysis of ATP in three separate catalytic sites on the beta subunits. This chain is ATP synthase subunit beta, mitochondrial (ATPB), found in Nicotiana plumbaginifolia (Leadwort-leaved tobacco).